A 90-amino-acid polypeptide reads, in one-letter code: DNA-directed RNA polymerase subunit omega (90 aa).

The segment at 69-90 (RQEQQEQDAAELAAVSSITHNR) is disordered.

It belongs to the RNA polymerase subunit omega family. In terms of assembly, the RNAP catalytic core consists of 2 alpha, 1 beta, 1 beta' and 1 omega subunit. When a sigma factor is associated with the core the holoenzyme is formed, which can initiate transcription.

The enzyme catalyses RNA(n) + a ribonucleoside 5'-triphosphate = RNA(n+1) + diphosphate. Functionally, promotes RNA polymerase assembly. Latches the N- and C-terminal regions of the beta' subunit thereby facilitating its interaction with the beta and alpha subunits. This is DNA-directed RNA polymerase subunit omega from Aliivibrio fischeri (strain ATCC 700601 / ES114) (Vibrio fischeri).